Here is a 397-residue protein sequence, read N- to C-terminus: Elongation factor Tu (397 aa).

Residues 10–207 enclose the tr-type G domain; it reads KPHVNIGTIG…AVDESIPDPV (198 aa). Residues 19–26 form a G1 region; sequence GHVDHGKT. Residue 19 to 26 participates in GTP binding; the sequence is GHVDHGKT. T26 is a Mg(2+) binding site. The segment at 63 to 67 is G2; sequence GITIN. The segment at 84–87 is G3; the sequence is DAPG. GTP contacts are provided by residues 84-88 and 139-142; these read DAPGH and NKAD. Residues 139–142 form a G4 region; that stretch reads NKAD. Residues 177-179 are G5; it reads SGL.

It belongs to the TRAFAC class translation factor GTPase superfamily. Classic translation factor GTPase family. EF-Tu/EF-1A subfamily. Monomer.

It localises to the cytoplasm. It carries out the reaction GTP + H2O = GDP + phosphate + H(+). Its function is as follows. GTP hydrolase that promotes the GTP-dependent binding of aminoacyl-tRNA to the A-site of ribosomes during protein biosynthesis. The polypeptide is Elongation factor Tu (Tropheryma whipplei (strain Twist) (Whipple's bacillus)).